The following is a 657-amino-acid chain: Protein FAM200B (657 aa).

Belongs to the FAM200 family.

In Homo sapiens (Human), this protein is Protein FAM200B.